A 1012-amino-acid polypeptide reads, in one-letter code: Structural polyprotein (1012 aa).

Aspartate 30 lines the a divalent metal cation pocket. A Peptidase S50 domain is found at 513–755 (ADKGYEVVAN…AGRQYHLAMA (243 aa)). The active-site Nucleophile is serine 652. Residue lysine 692 is part of the active site. The tract at residues 970-1012 (MEMKHRNPRRAPPKPKPKPNAPTQRPPGRLGRWIRTVSDEDLE) is disordered. A compositionally biased stretch (basic residues) spans 975–986 (RNPRRAPPKPKP). The interval 1003–1012 (IRTVSDEDLE) is interaction with VP1 protein.

As to quaternary structure, homotrimer. A central divalent metal stabilizes the VP2 trimer. Interacts with host ITGA4/ITGB1. Homodimer. Interacts (via C-terminus) with VP1 in the cytoplasm. Interacts with VP2. In terms of processing, specific enzymatic cleavages yield mature proteins. The capsid assembly seems to be regulated by polyprotein processing. The protease VP4 cleaves itself off the polyprotein, thus releasing pre-VP2 and VP3 within the infected cell. During capsid assembly, the C-terminus of pre-VP2 is further processed by VP4, giving rise to VP2, the external capsid protein and three small peptides that all stay closely associated with the capsid.

It is found in the virion. The protein localises to the host cytoplasm. Capsid protein VP2 self assembles to form an icosahedral capsid with a T=13 symmetry, about 70 nm in diameter, and consisting of 260 VP2 trimers. The capsid encapsulates the genomic dsRNA. VP2 is also involved in attachment and entry into the host cell by interacting with host ITGA4/ITGB1. In terms of biological role, the precursor of VP2 plays an important role in capsid assembly. First, pre-VP2 and VP2 oligomers assemble to form a procapsid. Then, the pre-VP2 intermediates may be processed into VP2 proteins by proteolytic cleavage mediated by VP4 to obtain the mature virion. The final capsid is composed of pentamers and hexamers but VP2 has a natural tendency to assemble into all-pentameric structures. Therefore pre-VP2 may be required to allow formation of the hexameric structures. Its function is as follows. Protease VP4 is a serine protease that cleaves the polyprotein into its final products. Pre-VP2 is first partially cleaved, and may be completely processed by VP4 upon capsid maturation. Functionally, capsid protein VP3 plays a key role in virion assembly by providing a scaffold for the capsid made of VP2. May self-assemble to form a T=4-like icosahedral inner-capsid composed of at least 180 trimers. Plays a role in genomic RNA packaging by recruiting VP1 into the capsid and interacting with the dsRNA genome segments to form a ribonucleoprotein complex. Additionally, the interaction of the VP3 C-terminal tail with VP1 removes the inherent structural blockade of the polymerase active site. Thus, VP3 can also function as a transcriptional activator. Structural peptide 1 is a small peptide derived from pre-VP2 C-terminus. It destabilizes and perforates cell membranes, suggesting a role during entry. In terms of biological role, structural peptide 2 is a small peptide derived from pVP2 C-terminus. It is not essential for the virus viability, but viral growth is affected when missing. Its function is as follows. Structural peptide 3 is a small peptide derived from pVP2 C-terminus. It is not essential for the virus viability, but viral growth is affected when missing. Functionally, structural peptide 4 is a small peptide derived from pVP2 C-terminus. It is essential for the virus viability. The chain is Structural polyprotein from Avian infectious bursal disease virus (strain E) (IBDV).